The sequence spans 2457 residues: Highly reducing polyketide synthase ACTTS3 (2457 aa).

The region spanning 5-435 (REPIAVIGSA…GTNAHVILES (431 aa)) is the Ketosynthase family 3 (KS3) domain. Active-site for beta-ketoacyl synthase activity residues include C179, H316, and H356. The segment at 545-856 (RVLGIFTGQG…VMEAVLESSP (312 aa)) is malonyl-CoA:ACP transacylase (MAT) domain. S641 functions as the For malonyltransferase activity in the catalytic mechanism. The tract at residues 938-1078 (HELLGRRTAD…GRIIIHLGSG (141 aa)) is N-terminal hotdog fold. The segment at 938–1244 (HELLGRRTAD…LSLKSVAEPT (307 aa)) is dehydratase (DH) domain. The 309-residue stretch at 938–1246 (HELLGRRTAD…LKSVAEPTEE (309 aa)) folds into the PKS/mFAS DH domain. The Proton acceptor; for dehydratase activity role is filled by H970. Residues 1091–1246 (TDLSPVDLDR…LKSVAEPTEE (156 aa)) form a C-terminal hotdog fold region. D1152 acts as the Proton donor; for dehydratase activity in catalysis. Residues 1399 to 1587 (ETMNNCIARA…DVFYDFPDRS (189 aa)) form a methyltransferase (CMet) domain region. The segment at 2085-2281 (FLPDKTYLMI…SDRHIENHLR (197 aa)) is ketoreductase (KR) domain. A Carrier domain is found at 2374 to 2451 (DVTTVFQQAF…EISIDATKKY (78 aa)). Position 2411 is an O-(pantetheine 4'-phosphoryl)serine (S2411).

The cofactor is pantetheine 4'-phosphate.

The protein operates within mycotoxin biosynthesis. In terms of biological role, highly reducing polyketide synthase; part of the gene clusters that mediate the biosynthesis of the host-selective toxins (HSTs) ACT-toxins responsible for brown spot of tangerine disease by the tangerine pathotype which affects tangerines and mandarins. ACT-toxins consist of three moieties, 9,10-epoxy-8-hydroxy-9-methyl-decatrienoic acid (EDA), valine and a polyketide. ACT-toxin I is toxic to both citrus and pear; toxin II the 5''-deoxy derivative of ACT-toxin I, is highly toxic to pear and slightly toxic to citrus. On cellular level, ACT-toxins affect plasma membrane of susceptible cells and cause a sudden increase in loss of K(+) after a few minutes of toxin treatment. The acyl-CoA ligase ACTT1, the hydrolase ACTT2, the enoyl-CoA hydratases ACTT3 and ACTT6, and the acyl-CoA synthetase ACTT5 are all involved in the biosynthesis of the AK-, AF- and ACT-toxin common 9,10-epoxy-8-hydroxy-9-methyl-decatrienoic acid (EDA) structural moiety. The exact role of each enzyme, and of additional enzymes identified within the AF-toxin clusters have still to be determined. On the other hand, ACTTS1 to ACTTS4 are specific to the tangerine pathotype. The function of ACTTS3 is to elongate the polyketide chain portion of ACT-toxin that is unique to this toxin. The enoyl-reductase ACTTS2 might complement the missing enoyl-reductase (ER) domain in ACTTS3 in the synthesis of the polyketide portion of ACT-toxin. The roles of the nonribosomal peptide synthetases-related proteins ACTTS1 and ACTTS4 have also still not been elucidated. The sequence is that of Highly reducing polyketide synthase ACTTS3 from Alternaria alternata (Alternaria rot fungus).